A 192-amino-acid polypeptide reads, in one-letter code: uncharacterized protein (192 aa).

The region spanning 29 to 160 (QRQAAVLVPV…PLDIHRRGNH (132 aa)) is the Nudix hydrolase domain. The Nudix box signature appears at 67 to 89 (GAVDDTDASLIAAALREAQEEVA). Positions 83 and 87 each coordinate Mg(2+).

This sequence belongs to the Nudix hydrolase family. PCD1 subfamily. Requires Mn(2+) as cofactor. Mg(2+) is required as a cofactor.

Its function is as follows. Probably mediates the hydrolysis of some nucleoside diphosphate derivatives. This is an uncharacterized protein from Cronobacter sakazakii (strain ATCC BAA-894) (Enterobacter sakazakii).